The sequence spans 413 residues: DNA primase large subunit PriL (413 aa).

Residues C230, C301, C310, and C317 each coordinate [4Fe-4S] cluster. Basic and acidic residues-rich tracts occupy residues M340–K356, K362–G381, and K388–I413. The segment at M340–I413 is disordered.

The protein belongs to the eukaryotic-type primase large subunit family. Heterodimer of a small subunit (PriS) and a large subunit (PriL). [4Fe-4S] cluster is required as a cofactor.

In terms of biological role, regulatory subunit of DNA primase, an RNA polymerase that catalyzes the synthesis of short RNA molecules used as primers for DNA polymerase during DNA replication. Stabilizes and modulates the activity of the small subunit, increasing the rate of DNA synthesis, and conferring RNA synthesis capability. The DNA polymerase activity may enable DNA primase to also catalyze primer extension after primer synthesis. May also play a role in DNA repair. This chain is DNA primase large subunit PriL, found in Methanosarcina barkeri (strain Fusaro / DSM 804).